The sequence spans 200 residues: dITP/XTP pyrophosphatase (200 aa).

A substrate-binding site is contributed by 8–13 (TRNAGK). Residue aspartate 72 is the Proton acceptor of the active site. Aspartate 72 is a Mg(2+) binding site. Substrate is bound by residues serine 73, 155–158 (FGYD), lysine 178, and 183–184 (HR).

It belongs to the HAM1 NTPase family. As to quaternary structure, homodimer. Requires Mg(2+) as cofactor.

The enzyme catalyses XTP + H2O = XMP + diphosphate + H(+). It catalyses the reaction dITP + H2O = dIMP + diphosphate + H(+). The catalysed reaction is ITP + H2O = IMP + diphosphate + H(+). In terms of biological role, pyrophosphatase that catalyzes the hydrolysis of nucleoside triphosphates to their monophosphate derivatives, with a high preference for the non-canonical purine nucleotides XTP (xanthosine triphosphate), dITP (deoxyinosine triphosphate) and ITP. Seems to function as a house-cleaning enzyme that removes non-canonical purine nucleotides from the nucleotide pool, thus preventing their incorporation into DNA/RNA and avoiding chromosomal lesions. The polypeptide is dITP/XTP pyrophosphatase (Streptomyces coelicolor (strain ATCC BAA-471 / A3(2) / M145)).